A 475-amino-acid chain; its full sequence is Putative poly(A) polymerase catalytic subunit (475 aa).

It belongs to the poxviridae poly(A) polymerase catalytic subunit family. Highly divergent.

The protein resides in the virion. It catalyses the reaction RNA(n) + ATP = RNA(n)-3'-adenine ribonucleotide + diphosphate. Polymerase that creates the 3'-poly(A) tail of mRNAs. This Ornithodoros (relapsing fever ticks) protein is Putative poly(A) polymerase catalytic subunit.